Consider the following 516-residue polypeptide: AMP phosphorylase (516 aa).

AMP contacts are provided by residues Gly169, 195–200 (SRAITG), and Thr204. The active-site Proton donor is Asp257. Residues Ser265 and Lys289 each contribute to the AMP site.

This sequence belongs to the thymidine/pyrimidine-nucleoside phosphorylase family. Type 2 subfamily.

The catalysed reaction is AMP + phosphate = alpha-D-ribose 1,5-bisphosphate + adenine. It carries out the reaction CMP + phosphate = cytosine + alpha-D-ribose 1,5-bisphosphate. The enzyme catalyses UMP + phosphate = alpha-D-ribose 1,5-bisphosphate + uracil. Its function is as follows. Catalyzes the conversion of AMP and phosphate to adenine and ribose 1,5-bisphosphate (R15P). Exhibits phosphorylase activity toward CMP and UMP in addition to AMP. Functions in an archaeal AMP degradation pathway, together with R15P isomerase and RubisCO. In Methanospirillum hungatei JF-1 (strain ATCC 27890 / DSM 864 / NBRC 100397 / JF-1), this protein is AMP phosphorylase.